The following is a 256-amino-acid chain: MPPKKQSSSGGNKPSGSGSSSGRSSSGSSCRCSCRCRCSIGGWLKFFAILFALVAPIAYVLEQRLESFYVFDTEHLHDLSKRAISAHGNDTKAIVKYIVDELNDRNGVAPYVNNDEEWVFNNAGGAMGAMYIIHASITEYLIIFGTAIGTEGHTGRHTADDYFHILTGTQTAYVPGEYEPEVYPPGSVHHLVRGTVKQYRMPESCFALEYARGWIPPMLFFGYADTLSSTLDFPTLWRTSVITGREMISNLLKGKF.

A disordered region spans residues 1 to 31; sequence MPPKKQSSSGGNKPSGSGSSSGRSSSGSSCR. A compositionally biased stretch (low complexity) spans 7-30; the sequence is SSSGGNKPSGSGSSSGRSSSGSSC. A helical transmembrane segment spans residues 40–60; it reads IGGWLKFFAILFALVAPIAYV.

It belongs to the ERG2 family.

The protein localises to the endoplasmic reticulum membrane. It functions in the pathway steroid metabolism; ergosterol biosynthesis; ergosterol from zymosterol: step 2/5. Functionally, catalyzes the reaction which results in unsaturation at C-7 in the B ring of sterols. The chain is C-8 sterol isomerase (erg-1) from Neurospora crassa (strain ATCC 24698 / 74-OR23-1A / CBS 708.71 / DSM 1257 / FGSC 987).